The primary structure comprises 782 residues: MQEVCSSLDTTSMGTQIKSESPLNPLQVQTGQTSLPVGGCGGAGVVGGVGGVGVSVGQPGIGQQGVPPVPSVLMVNKMTPNCDKRSADTAYWMTASEGGFINSQPSMAEFLNHLSPESPKIGTPVGSGAIGGVGVNVNVNVGVGVGYPVGVVPQTPDGMDSVPEYPWMKEKKTSRKSSNNNNQGDNSITEFVPENGLPRRLRTAYTNTQLLELEKEFHFNKYLCRPRRIEIAASLDLTERQVKVWFQNRRMKHKRQTLSKTDDEDNKDSLKGDDDQSDSNSNSKKSCQGCELPSDDIPDSTSNSRGHNNNTPSATNNNPSAGNLTPNSSLETGISSNLMGSTTVSASNVISADSSVASSVSLDEDIEESSPIKVKKKDDGQVIKKEAVSTSSKASPFGYENSTPSLVSFRRDSDASAVGNAPTSKAVGKKRFQSAANAIATPTPLSDSNSGNGSGGGPAGGYFPGYYPSPKQQQQVQQQQLHPQQQQLPQQQPQDYYGKYDIEFAASPHHNPHNKQQALHGEYLSPKPSSANFHQNSQQQQQNDHFYYNYNDTNGTPYLNHQQQHHHHAQHHQQQQHHQNHVADFEGPVNGPSNFNNGAYYDNMSFQQQAQAHQHQTVVFQQQQPHQPAAINHQHMHHLGNGETYSALGLQMENCEGYNNFGAAGTGGGYYEAGQQPPIPATHGHGHHPHHVQVPAQAHAPIHAHHNSAAIPGGVGVGPPPSHIHGFAINGGPAVQGQAFGNNGSTAAGTAAISGLENSNSSDFNFLSNLANDFAPEYYQLS.

Disordered stretches follow at residues 1 to 23, 153 to 195, 251 to 336, 358 to 380, 439 to 493, and 547 to 586; these read MQEV…ESPL, PQTP…VPEN, MKHK…GISS, SSVS…KDDG, IATP…QQQP, and YYNY…ADFE. Positions 164–169 match the Antp-type hexapeptide motif; sequence EYPWMK. A DNA-binding region (homeobox) is located at residues 198–257; sequence PRRLRTAYTNTQLLELEKEFHFNKYLCRPRRIEIAASLDLTERQVKVWFQNRRMKHKRQT. Residues 308–321 are compositionally biased toward low complexity; the sequence is NNNTPSATNNNPSA. The span at 322 to 336 shows a compositional bias: polar residues; that stretch reads GNLTPNSSLETGISS. Gly residues predominate over residues 452–463; the sequence is NGSGGGPAGGYF. The segment covering 464 to 493 has biased composition (low complexity); that stretch reads PGYYPSPKQQQQVQQQQLHPQQQQLPQQQP. Over residues 563-580 the composition is skewed to basic residues; sequence QQHHHHAQHHQQQQHHQN.

This sequence belongs to the Antp homeobox family. Proboscipedia subfamily.

The protein resides in the nucleus. Functionally, sequence-specific transcription factor which is part of a developmental regulatory system that provides cells with specific positional identities on the anterior-posterior axis. Controls development of mouthparts, and labial and maxillary palps. The sequence is that of Homeotic protein proboscipedia (pb) from Drosophila melanogaster (Fruit fly).